An 812-amino-acid chain; its full sequence is Probable phosphoketolase (812 aa).

Belongs to the XFP family. Thiamine diphosphate serves as cofactor.

The protein is Probable phosphoketolase of Thermosynechococcus vestitus (strain NIES-2133 / IAM M-273 / BP-1).